The following is a 462-amino-acid chain: Alkaline phosphatase 3 (462 aa).

An N-terminal signal peptide occupies residues 1–32 (MKKFPKKLLPIAVLSSIAFSSLASGSVPEASA). Asp52 contributes to the Mg(2+) binding site. Asp52 lines the Zn(2+) pocket. The active-site Phosphoserine intermediate is Ser101. 2 residues coordinate Mg(2+): Thr154 and Glu275. Zn(2+)-binding residues include Asp280, His284, Asp322, His323, and His419.

It belongs to the alkaline phosphatase family. In terms of assembly, monomer. The cofactor is Mg(2+). Zn(2+) is required as a cofactor.

The enzyme catalyses a phosphate monoester + H2O = an alcohol + phosphate. The chain is Alkaline phosphatase 3 (phoB) from Bacillus subtilis (strain 168).